A 525-amino-acid chain; its full sequence is MAEPLRTHRVVVVGAGIAGLTSALLLAARGLDVTLVDKAATPGGKMRQVMVDGAPVDAGPTVFTMRWVFDQIFAAAGATVEEHLKLQPLGVLARHAWRGHEPRLDLFADIRRSAEAIGEFSGPQEAQRFLGFCRQARQLYDHLEGPYIRSERPTLGSMVGDLGPRGLMALMQIGPFSNLWRSLSRHFRDPKLQQLFARYATYCGASPWMAPATLMLVAQVELDGVWAVEGGMHAVAKAFSALAEARGVKTRYGCGCEQILVRDGRAVGVRLAGGEEITADSVVFNGDVNALAQGLLGDPPRRATAAVAPARRSLSALTWLVNARTSGFPLVRHNVFFDEDYASEFDDIFRQRQLPRRGTVYVCAQDRTDEGIGSDAPERLLCLVNAPADGDRRPFDHSETDPCEQRSLALMRECGLTIDWSPQTHRLVTPANFERLFPATGGALYGPATHGWMSSFHRASSTSRLPGLYLAGGSVHPGPGVPMAAMSGRLAAETLMAHLDSTSRSRRVVISGGMSTRSATTGGMA.

This sequence belongs to the carotenoid/retinoid oxidoreductase family.

It catalyses the reaction rhodopin + A = (3E)-3,4-didehydrorhodopin + AH2. The protein operates within carotenoid biosynthesis; spheroidene biosynthesis. Functionally, catalyzes the introduction of C-3,4 double bonds into 1-hydroxyneurosporene (1-HO-Neu) to yield demethylspheroidene (DMS). The preferred substrates are 1-hydroxy-neurosporene, 1-hydroxy-lycopene and 1,1-dihydroxyneurosporene, however the 3,4-didehydrolycopene derivatives such as 1,1-dihydroxy-3,4-didehydrolycopene, 1-methoxy-1-hydroxy-3,4-didehydrolycopene and 1-hydroxy-3,4-didehydrolycopene are also efficiently converted. 1-HO-carotene derivatives can be also used. The protein is Hydroxyneurosporene desaturase (crtD) of Rubrivivax gelatinosus (Rhodocyclus gelatinosus).